Here is a 305-residue protein sequence, read N- to C-terminus: MKNFLESLIENNRQYVEHGKLASYIPELEKANKEDLGIYIVTLDGKEVGAGEYDKKFTIQSISKVITLMLAILDNGKDRVFSRVGVEPTGDSFNSIVSLERKPSKKPFNPMVNSGAILTTSLIEGDSEEEKFERILEFTRKVTGNDDIQLNEDVYLSEKETGDRNRALAYFMKSNGVIEGNIDDILDLYFKQCSLEVNAKDLARFGAMLANDGVLPWNGERVISREICRIIKTIMVTCGMYDDSGKFAVHIGIPAKSGVGGGIMAAVPRRMGIGIFGPSLDDKGNSIAGTHVMKDLSEELDLSIF.

Substrate-binding residues include Ser61, Asn113, Glu158, Asn165, Tyr189, Tyr241, and Val259.

This sequence belongs to the glutaminase family. As to quaternary structure, homotetramer.

The catalysed reaction is L-glutamine + H2O = L-glutamate + NH4(+). The polypeptide is Glutaminase 2 (Clostridium perfringens (strain 13 / Type A)).